Here is a 620-residue protein sequence, read N- to C-terminus: Schwann cell myelin protein (620 aa).

Residues 1 to 17 (MELLVLTVLLMGTGCIS) form the signal peptide. At 18 to 516 (APWAAWMPPK…GGLVWAKVGP (499 aa)) the chain is on the extracellular side. The 79-residue stretch at 28 to 106 (MAALSGTCVQ…RDCTLNIARL (79 aa)) folds into the Ig-like V-type domain. Disulfide bonds link Cys35/Cys164, Cys40/Cys99, and Cys158/Cys216. Arg117 is a binding site for N-acetylneuraminate. Ig-like C2-type domains follow at residues 151-233 (GSEA…DVGL), 239-322 (PQVV…LRVA), 325-407 (PRAP…FNIS), and 414-495 (VLPA…NRHG). An N-linked (GlcNAc...) asparagine glycan is attached at Asn222. Cys260 and Cys304 are joined by a disulfide. Asn314 and Asn331 each carry an N-linked (GlcNAc...) asparagine glycan. Cys346 and Cys391 form a disulfide bridge. N-linked (GlcNAc...) asparagine glycosylation is present at Asn405. 2 cysteine pairs are disulfide-bonded: Cys420–Cys429 and Cys431–Cys488. Asn449 is a glycosylation site (N-linked (GlcNAc...) asparagine). Residues 517–536 (VGAVVAFAIVIAVVCYLSQS) form a helical membrane-spanning segment. At 537–620 (RRKKGAGSPE…PPEYAEIRVK (84 aa)) the chain is on the cytoplasmic side. 2 disordered regions span residues 539-562 (KKGA…DPDL) and 583-620 (VKEG…IRVK).

Belongs to the immunoglobulin superfamily. SIGLEC (sialic acid binding Ig-like lectin) family. As to expression, exclusively expressed by myelinating and nonmyelinating Schwann cells and oligodendrocytes.

It is found in the membrane. This Coturnix japonica (Japanese quail) protein is Schwann cell myelin protein (SMP).